Here is a 167-residue protein sequence, read N- to C-terminus: Ribosome maturation factor RimM (167 aa).

A PRC barrel domain is found at 94–165 (ENEYYYSDII…TIRITPMEGL (72 aa)).

It belongs to the RimM family. In terms of assembly, binds ribosomal protein uS19.

The protein resides in the cytoplasm. In terms of biological role, an accessory protein needed during the final step in the assembly of 30S ribosomal subunit, possibly for assembly of the head region. Essential for efficient processing of 16S rRNA. May be needed both before and after RbfA during the maturation of 16S rRNA. It has affinity for free ribosomal 30S subunits but not for 70S ribosomes. This is Ribosome maturation factor RimM from Staphylococcus haemolyticus (strain JCSC1435).